Here is a 2126-residue protein sequence, read N- to C-terminus: MWPGPALLLLGLGLGLGSQPPPTGPRGLPGVLRGAPGLGQGAESSVRGGDTGGLSPRAAPRHASPTPPRRCPSGAAARVLLKVNSSDPAAAKANVSCQTAPCIMQPVKINRKDQNAPLILSRDEEATLNITVRWYCPDALVIRKSWVYFSVASVNDTPDWNRPVLLPQVAVSKGFSLHIPKYALPYGVYVFNFTLSIFRWDLAWPTVTGSDIIYIWVRKRPLKAVLLGAPRVTVKFSDELILNGSMSYDPEADIPTWGLQFFWYCTTNPRYYSGNYVLVINQAVCHPEQDSLNWPWAVGSVLTIPPKTLRGNGVYYFRMVVQKQNRTAFSDKTVHVLQGLQPKAHISCIENCGPTLGVSDRFSLFLNCPSCGRQDLYSWSILSLTGHEVMFDWAGQAITRRNGPYLSIKAFAFRNFLENRVWVSLILKSWSGMTTTLRHPVVINHGPRVGKCKINPASGISMVTKFAVECSDFKDENLPLKYKIIVSELDSIGAISSVEENTLGSVVYSGAEPITPAFFLPVGTVTDEYNVRLYVQVYDSLGTFSQVTLQATVTAPTVRDSSKDVLQQLLNVTMKPTSLLSTLLQKQDWLQAGYLTYVVISVLNNIKGEQELQDDRARLLEHLVKQSLTFAMNTADEIGQSVMVITKLTQKASDLSQADLEATSFRLRQASQDLQEYQHRHKHLQQVEVVGTGILTSLSNLLKLINPYYTLQDPLFVVESLSDTILANKVPGSKTTALRTSNFNMYVEKVENWNVFKAFRNDSLCPNCLRATLNASTVPRLPAKAPISMMFCEFADDPFPWLTYPENISVDVVGFRMTGVADNNKVIEITPDIAEVYLVRKDLTPSSFNLTVGPGIKSDGFSKVTTGGISFEVDSRWTGELLIHIVTNVTVLFEALVYEGCQLTPTNLMATFLVPNDIPPIVKWSGLFDPTCSVKEARVVCLSSSLLRSIAQRRFSFKYNISMVLQASRFVLKPTNKLVRIALFMVHCLDMYGIQSDWQQSTCVLGEKTTWKTVHCVCRNGRRSRRQLTSVKLTYHHLHTHFVTAKVIVVPNPVDLRLAIISNLTQNPATFLAVLFIMILYAILAFWALHRDVIDLYFRDNVVILTDNDPFDTLCYLVTIFTGSRWGSGTRANVFIQLMGTEGTSDVHCLSHPYFKTLYRGSINTFLLTTKNDLGDIHSIRVWHDNSGEAPSWYLSRIKVENLFNKRIWLFVCRRWLSVDTTLDATFSVTNPDEPLKRTDFFMIDVRDKLRKNHMWISIFTEIVPKPFNRLQRLSCCLAMLLSSLVCNIMFFNLNQKEKIESRHMHIIRSMLIGIESVVITIPVQLLITFFFTYSQKNLKMNLDKVAPQKHPLMSEEGLSWKERLHKWHEYEMKALPRRAAVSTSAPEEKEAFETSQKHEKADTQMSNKNSSNNNQEASEGVPPKAFSSQPHTTESVQKKTQIILPRWCVYIAWFLVFATSGISSFFIVFYGVTYGYAKSIEWLFASFCSFCQSVFLVQPCNILLRSGTRSYKPKYCKNLSWSSKYHYSEIRLQGLTMTQEEMEQLHEDIAYVRSLSMYQPITEDKIQILRRENRIRRRSFLFLSYLVTHFIFLTLLLLLIFSLRHNDSFYYNQFIRHRFSVDLATVMKLGDIYTWLHGVFLPLLHNDPNPTFLPDSSSKILGLPLVRQVRARPSNKTCLLAKKFVQSSVAGEIHCHPQYGIDPEDTQHYSSVWSKAGKQSTDKASHGFTYKPPGKRWVYHSYGVLNTYGSGGYVFYFFPGQQMFNSTVRLKELEGKNWLDELTWAVIVELTTLNPDTSLMCSISVVFEVSPLGVVNSSLSVYSFSLADFNRKTSSEIYLYAAILIFFCAYVVDEGYIIRQERASYIRSVYNLLNFSLKCMFALLIVLFFWKYFLATKMVQLYLADPEAFIPFHAVSRVDHFMRIILAFLLFLTILKTLRYSRFFYNVRLAQKAIQAALPGICHTALVVSIYSFMYVAFGYLVFGQHEWNYSNMIHATQTIFSYCVSAFQNTEFSGNKVLGVLFLSSFMLVMICIFINLFQAVILSAYDEMKQPVYEEPSDEAEAVTYLCNRLKSGFDFLTTRSRDKDQSNFFVDMLYGQPEKNTRRFLGLKARNINGKKMIYLVV.

A signal peptide spans 1–18 (MWPGPALLLLGLGLGLGS). Residues 19–1068 (QPPPTGPRGL…AIISNLTQNP (1050 aa)) are Extracellular-facing. The disordered stretch occupies residues 20 to 71 (PPPTGPRGLPGVLRGAPGLGQGAESSVRGGDTGGLSPRAAPRHASPTPPRRC). N-linked (GlcNAc...) asparagine glycosylation is found at N84, N94, N129, N192, N243, N325, N571, N761, N774, N807, N849, N888, N960, and N1063. The region spanning 102 to 797 (CIMQPVKINR…SMMFCEFADD (696 aa)) is the REJ domain. The chain crosses the membrane as a helical span at residues 1069–1089 (ATFLAVLFIMILYAILAFWAL). At 1090–1273 (HRDVIDLYFR…VPKPFNRLQR (184 aa)) the chain is on the cytoplasmic side. A PLAT domain is found at 1114–1231 (LCYLVTIFTG…TLDATFSVTN (118 aa)). The helical transmembrane segment at 1274–1294 (LSCCLAMLLSSLVCNIMFFNL) threads the bilayer. The Extracellular portion of the chain corresponds to 1295 to 1311 (NQKEKIESRHMHIIRSM). A helical membrane pass occupies residues 1312-1332 (LIGIESVVITIPVQLLITFFF). Topologically, residues 1333-1449 (TYSQKNLKMN…KTQIILPRWC (117 aa)) are cytoplasmic. The disordered stretch occupies residues 1379–1431 (RAAVSTSAPEEKEAFETSQKHEKADTQMSNKNSSNNNQEASEGVPPKAFSSQP). Residues 1387–1403 (PEEKEAFETSQKHEKAD) show a composition bias toward basic and acidic residues. A helical transmembrane segment spans residues 1450 to 1470 (VYIAWFLVFATSGISSFFIVF). At 1471–1483 (YGVTYGYAKSIEW) the chain is on the extracellular side. Residues 1484–1504 (LFASFCSFCQSVFLVQPCNIL) form a helical membrane-spanning segment. At 1505–1580 (LRSGTRSYKP…RRENRIRRRS (76 aa)) the chain is on the cytoplasmic side. The helical transmembrane segment at 1581 to 1601 (FLFLSYLVTHFIFLTLLLLLI) threads the bilayer. The Extracellular portion of the chain corresponds to 1602-1838 (FSLRHNDSFY…DFNRKTSSEI (237 aa)). 4 N-linked (GlcNAc...) asparagine glycosylation sites follow: N1607, N1676, N1766, and N1817. Residues 1839–1859 (YLYAAILIFFCAYVVDEGYII) traverse the membrane as a helical segment. The Cytoplasmic portion of the chain corresponds to 1860–1875 (RQERASYIRSVYNLLN). The helical transmembrane segment at 1876–1896 (FSLKCMFALLIVLFFWKYFLA) threads the bilayer. Over 1897-1918 (TKMVQLYLADPEAFIPFHAVSR) the chain is Extracellular. The helical transmembrane segment at 1919 to 1939 (VDHFMRIILAFLLFLTILKTL) threads the bilayer. Over 1940–1964 (RYSRFFYNVRLAQKAIQAALPGICH) the chain is Cytoplasmic. A helical membrane pass occupies residues 1965–1985 (TALVVSIYSFMYVAFGYLVFG). At 1986–2019 (QHEWNYSNMIHATQTIFSYCVSAFQNTEFSGNKV) the chain is on the extracellular side. The chain crosses the membrane as a helical span at residues 2020-2040 (LGVLFLSSFMLVMICIFINLF). Over 2041-2126 (QAVILSAYDE…NGKKMIYLVV (86 aa)) the chain is Cytoplasmic.

This sequence belongs to the polycystin family. As to expression, exclusively expressed in testis.

The protein resides in the cell membrane. Its subcellular location is the cytoplasmic vesicle. The protein localises to the secretory vesicle. It localises to the acrosome membrane. It is found in the nucleus. Functionally, testis-specific protein that controls sperm transport and the timing of zona pellucida-evoked exocytosis of the sperm acrosome. In Mus musculus (Mouse), this protein is Polycystin family receptor for egg jelly (Pkdrej).